Here is a 90-residue protein sequence, read N- to C-terminus: Probable Fe(2+)-trafficking protein (90 aa).

Belongs to the Fe(2+)-trafficking protein family. As to quaternary structure, monomer.

Could be a mediator in iron transactions between iron acquisition and iron-requiring processes, such as synthesis and/or repair of Fe-S clusters in biosynthetic enzymes. The polypeptide is Probable Fe(2+)-trafficking protein (Edwardsiella ictaluri (strain 93-146)).